Here is a 113-residue protein sequence, read N- to C-terminus: Large ribosomal subunit protein bL17 (113 aa).

This sequence belongs to the bacterial ribosomal protein bL17 family. As to quaternary structure, part of the 50S ribosomal subunit. Contacts protein L32.

The protein is Large ribosomal subunit protein bL17 of Clostridioides difficile (strain 630) (Peptoclostridium difficile).